The following is a 57-amino-acid chain: uncharacterized protein (57 aa).

This is an uncharacterized protein from Ureaplasma parvum serovar 3 (strain ATCC 700970).